The following is a 640-amino-acid chain: Chaperone protein DnaK (640 aa).

Threonine 198 is subject to Phosphothreonine; by autocatalysis. The interval 600-640 (KTQGAGAEGGEQPHGEQEAGGAAKGEKVVDADFEEVKDDKK) is disordered. Residues 630–640 (ADFEEVKDDKK) are compositionally biased toward acidic residues.

Belongs to the heat shock protein 70 family.

In terms of biological role, acts as a chaperone. This Citrifermentans bemidjiense (strain ATCC BAA-1014 / DSM 16622 / JCM 12645 / Bem) (Geobacter bemidjiensis) protein is Chaperone protein DnaK.